We begin with the raw amino-acid sequence, 205 residues long: UPF0301 protein AZC_0488 (205 aa).

Belongs to the UPF0301 (AlgH) family.

The sequence is that of UPF0301 protein AZC_0488 from Azorhizobium caulinodans (strain ATCC 43989 / DSM 5975 / JCM 20966 / LMG 6465 / NBRC 14845 / NCIMB 13405 / ORS 571).